A 456-amino-acid chain; its full sequence is Bifunctional protein GlmU (456 aa).

The pyrophosphorylase stretch occupies residues 1-229; it reads MLNNAMSVVI…LSEVEGVNNR (229 aa). UDP-N-acetyl-alpha-D-glucosamine-binding positions include 11–14, Lys25, Gln76, 81–82, 103–105, Gly140, Glu154, Asn169, and Asn227; these read LAAG, GT, and YGD. Asp105 serves as a coordination point for Mg(2+). Asn227 contributes to the Mg(2+) binding site. The linker stretch occupies residues 230 to 250; it reads LQLSRLERVYQSEQAEKLLLA. The interval 251–456 is N-acetyltransferase; sequence GVMLRDPARF…EGWRRPVKKK (206 aa). UDP-N-acetyl-alpha-D-glucosamine is bound by residues Arg333 and Lys351. The active-site Proton acceptor is the His363. UDP-N-acetyl-alpha-D-glucosamine-binding residues include Tyr366 and Asn377. Acetyl-CoA-binding positions include Ala380, 386 to 387, Ser405, Ala423, and Arg440; that span reads NY.

In the N-terminal section; belongs to the N-acetylglucosamine-1-phosphate uridyltransferase family. It in the C-terminal section; belongs to the transferase hexapeptide repeat family. In terms of assembly, homotrimer. Mg(2+) serves as cofactor.

The protein resides in the cytoplasm. It carries out the reaction alpha-D-glucosamine 1-phosphate + acetyl-CoA = N-acetyl-alpha-D-glucosamine 1-phosphate + CoA + H(+). The enzyme catalyses N-acetyl-alpha-D-glucosamine 1-phosphate + UTP + H(+) = UDP-N-acetyl-alpha-D-glucosamine + diphosphate. It participates in nucleotide-sugar biosynthesis; UDP-N-acetyl-alpha-D-glucosamine biosynthesis; N-acetyl-alpha-D-glucosamine 1-phosphate from alpha-D-glucosamine 6-phosphate (route II): step 2/2. Its pathway is nucleotide-sugar biosynthesis; UDP-N-acetyl-alpha-D-glucosamine biosynthesis; UDP-N-acetyl-alpha-D-glucosamine from N-acetyl-alpha-D-glucosamine 1-phosphate: step 1/1. It functions in the pathway bacterial outer membrane biogenesis; LPS lipid A biosynthesis. In terms of biological role, catalyzes the last two sequential reactions in the de novo biosynthetic pathway for UDP-N-acetylglucosamine (UDP-GlcNAc). The C-terminal domain catalyzes the transfer of acetyl group from acetyl coenzyme A to glucosamine-1-phosphate (GlcN-1-P) to produce N-acetylglucosamine-1-phosphate (GlcNAc-1-P), which is converted into UDP-GlcNAc by the transfer of uridine 5-monophosphate (from uridine 5-triphosphate), a reaction catalyzed by the N-terminal domain. This Escherichia coli O6:K15:H31 (strain 536 / UPEC) protein is Bifunctional protein GlmU.